Here is a 48-residue protein sequence, read N- to C-terminus: Phosphatidylserine decarboxylase proenzyme (48 aa).

Belongs to the phosphatidylserine decarboxylase family. Type 1 subfamily. Pyruvate serves as cofactor.

The enzyme catalyses a 1,2-diacyl-sn-glycero-3-phospho-L-serine + H(+) = a 1,2-diacyl-sn-glycero-3-phosphoethanolamine + CO2. The protein operates within phospholipid metabolism; phosphatidylethanolamine biosynthesis; phosphatidylethanolamine from CDP-diacylglycerol: step 2/2. In Azotobacter vinelandii, this protein is Phosphatidylserine decarboxylase proenzyme (psd).